Here is an 83-residue protein sequence, read N- to C-terminus: Cytochrome b559 subunit alpha (83 aa).

Residues 21-35 form a helical membrane-spanning segment; it reads VIHSITIPSLFIAGW. His23 lines the heme pocket.

This sequence belongs to the PsbE/PsbF family. Heterodimer of an alpha subunit and a beta subunit. PSII is composed of 1 copy each of membrane proteins PsbA, PsbB, PsbC, PsbD, PsbE, PsbF, PsbH, PsbI, PsbJ, PsbK, PsbL, PsbM, PsbT, PsbX, PsbY, PsbZ, Psb30/Ycf12, at least 3 peripheral proteins of the oxygen-evolving complex and a large number of cofactors. It forms dimeric complexes. Requires heme b as cofactor.

Its subcellular location is the plastid. The protein localises to the chloroplast thylakoid membrane. In terms of biological role, this b-type cytochrome is tightly associated with the reaction center of photosystem II (PSII). PSII is a light-driven water:plastoquinone oxidoreductase that uses light energy to abstract electrons from H(2)O, generating O(2) and a proton gradient subsequently used for ATP formation. It consists of a core antenna complex that captures photons, and an electron transfer chain that converts photonic excitation into a charge separation. The chain is Cytochrome b559 subunit alpha from Huperzia lucidula (Shining clubmoss).